The following is a 265-amino-acid chain: MKKEVCSAAFLKAVFAEFLATLIFVFFGLGSALKWPSAMPSVLQISLAFGLAIGTMAQALGPVSGGHMNPAITLALLVGNQISLLRAVFYLVAQLVGAIAGAAILYGLAPYNARSNLAVNALNNNTTAGQAVVAEMILTFQLALCVFSSTDSRRTSPVGSPALSIGLSVTLGHLVGIYFTGCSMNPARSFGPAVIMSRFSSAHWVFWVGPIVGAATAAIIYFYLLFPHSLSLSDRVAILKGTYEPDEDWEESQEERKKTMELTAH.

The Cytoplasmic portion of the chain corresponds to 1 to 12 (MKKEVCSAAFLK). Residues 13 to 33 (AVFAEFLATLIFVFFGLGSAL) form a helical membrane-spanning segment. Over 34 to 39 (KWPSAM) the chain is Extracellular. A helical membrane pass occupies residues 40–60 (PSVLQISLAFGLAIGTMAQAL). At 61 to 65 (GPVSG) the chain is on the cytoplasmic side. Positions 66 to 74 (GHMNPAITL) form an intramembrane region, discontinuously helical. Residues 69-71 (NPA) carry the NPA 1 motif. The Cytoplasmic segment spans residues 75–87 (ALLVGNQISLLRA). The chain crosses the membrane as a helical span at residues 88-108 (VFYLVAQLVGAIAGAAILYGL). Over 109–126 (APYNARSNLAVNALNNNT) the chain is Extracellular. N-linked (GlcNAc...) asparagine glycosylation is found at asparagine 124 and asparagine 125. The helical transmembrane segment at 127-147 (TAGQAVVAEMILTFQLALCVF) threads the bilayer. The Cytoplasmic portion of the chain corresponds to 148-158 (SSTDSRRTSPV). Residues 159–179 (GSPALSIGLSVTLGHLVGIYF) form a helical membrane-spanning segment. Residue threonine 180 is a topological domain, extracellular. The discontinuously helical intramembrane region spans 181-191 (GCSMNPARSFG). An NPA 2 motif is present at residues 185–187 (NPA). At 192–203 (PAVIMSRFSSAH) the chain is on the extracellular side. Residues 204-224 (WVFWVGPIVGAATAAIIYFYL) traverse the membrane as a helical segment. Residues 225–265 (LFPHSLSLSDRVAILKGTYEPDEDWEESQEERKKTMELTAH) are Cytoplasmic-facing.

Belongs to the MIP/aquaporin (TC 1.A.8) family. In terms of assembly, homotetramer; each monomer provides an independent water pore. Interacts with TRPV4; the interaction is probably indirect and regulates TRPV4 activation by hypotonicity.

It is found in the apical cell membrane. It localises to the cell membrane. The protein resides in the cytoplasmic vesicle membrane. It carries out the reaction H2O(in) = H2O(out). Its function is as follows. Aquaporins form homotetrameric transmembrane channels, with each monomer independently mediating water transport across the plasma membrane along its osmotic gradient. Plays an important role in fluid secretion in salivary glands. Required for TRPV4 activation by hypotonicity. Together with TRPV4, controls regulatory volume decrease in salivary epithelial cells. Seems to play a redundant role in water transport in the eye, lung and in sweat glands. In Ovis aries (Sheep), this protein is Aquaporin-5.